The primary structure comprises 39 residues: Cytochrome b559 subunit beta (39 aa).

Residues 14 to 30 traverse the membrane as a helical segment; the sequence is WLAVHGLAVPTVSFLGS. His-18 contacts heme.

The protein belongs to the PsbE/PsbF family. Heterodimer of an alpha subunit and a beta subunit. PSII is composed of 1 copy each of membrane proteins PsbA, PsbB, PsbC, PsbD, PsbE, PsbF, PsbH, PsbI, PsbJ, PsbK, PsbL, PsbM, PsbT, PsbX, PsbY, PsbZ, Psb30/Ycf12, at least 3 peripheral proteins of the oxygen-evolving complex and a large number of cofactors. It forms dimeric complexes. It depends on heme b as a cofactor.

The protein resides in the plastid. The protein localises to the chloroplast thylakoid membrane. This b-type cytochrome is tightly associated with the reaction center of photosystem II (PSII). PSII is a light-driven water:plastoquinone oxidoreductase that uses light energy to abstract electrons from H(2)O, generating O(2) and a proton gradient subsequently used for ATP formation. It consists of a core antenna complex that captures photons, and an electron transfer chain that converts photonic excitation into a charge separation. The polypeptide is Cytochrome b559 subunit beta (Muilla maritima (Sea muilla)).